We begin with the raw amino-acid sequence, 71 residues long: Putative RNA-binding regulatory peptide (71 aa).

Interacts with IGF2BP1 (via KH3 and KH4 domains); the interaction results in increased binding of IGF2BP1 to N6-methyladenosine (m6A)-containing mRNAs. In terms of tissue distribution, detected in colon (at protein level).

Its function is as follows. Enhances binding of IGF2BP1 to N6-methyladenosine (m6A)-containing mRNAs, thereby contributing to increased mRNA stability. Also increases the interaction of IGF2BP1 with RNA stabilizers ELAVL1/HUR, MATR3 and PABPC1, and increases the interaction of RNA stabilizers ELAVL1/HUR, MATR3 and PABPC1 with m6A-containing mRNAs. Contributes to MYC stability by enhancing binding of IGF2BP1 to m6A-containing MYC mRNAs and increasing recruitment of RNA stabilizing proteins to m6A-containing MYC mRNAs. The polypeptide is Putative RNA-binding regulatory peptide (Homo sapiens (Human)).